The following is a 217-amino-acid chain: Chaperone protein TorD (217 aa).

The protein belongs to the TorD/DmsD family. TorD subfamily.

It localises to the cytoplasm. Involved in the biogenesis of TorA. Acts on TorA before the insertion of the molybdenum cofactor and, as a result, probably favors a conformation of the apoenzyme that is competent for acquiring the cofactor. The polypeptide is Chaperone protein TorD (Shewanella oneidensis (strain ATCC 700550 / JCM 31522 / CIP 106686 / LMG 19005 / NCIMB 14063 / MR-1)).